A 601-amino-acid chain; its full sequence is Protein nubbin (601 aa).

Over residues 1–25 (MVMSELRWHTASPEDNKNSLKRDLL) the composition is skewed to basic and acidic residues. 5 disordered regions span residues 1–32 (MVMS…PTSA), 49–94 (SRSP…AKRQ), 121–158 (KQEE…ATAS), 351–425 (PASS…ETTD), and 581–601 (INPS…YMMH). The segment covering 49–68 (SRSPSPLQSNASDCDDNNSS) has biased composition (low complexity). Residues 135–157 (NLTSDNSRHSTQSPSNSVKSATA) are compositionally biased toward polar residues. Low complexity predominate over residues 384–415 (TPSTPTSGTQMSQGTTTPQPKTVASAAAARAA). In terms of domain architecture, POU-specific spans 421–495 (EETTDLEELE…LLQKWLDDAD (75 aa)). Positions 523–582 (RRKKRTSIETTIRGALEKAFLANQKPTSEEITQLADRLSMEKEVVRVWFCNRRQKEKRIN) form a DNA-binding region, homeobox. The span at 591 to 601 (ADDDESSYMMH) shows a compositional bias: acidic residues.

It belongs to the POU transcription factor family. Class-2 subfamily. In terms of tissue distribution, initial expression in cellular blastoderm stage, then in ectodermal stripes during germband extension. Broad expression in the neuroectoderm followed by limitation to discrete subsets of CNS cells, and expression in specific PNS neurons and support cells.

Its subcellular location is the nucleus. Functionally, DNA-binding regulatory protein implicated in early development. Involved in neuronal cell fate decision. Repressed directly or indirectly by the BX-C homeotic proteins. The chain is Protein nubbin (nub) from Drosophila melanogaster (Fruit fly).